The chain runs to 397 residues: Succinate--CoA ligase [ADP-forming] subunit beta (397 aa).

The ATP-grasp domain occupies Lys9–Glu254. Residues Lys46, Gly53–Gly55, Glu109, Ala112, and Glu117 each bind ATP. Mg(2+) contacts are provided by Asn209 and Asp223. Residues Asn274 and Gly331–Met333 contribute to the substrate site.

Belongs to the succinate/malate CoA ligase beta subunit family. Heterotetramer of two alpha and two beta subunits. The cofactor is Mg(2+).

The enzyme catalyses succinate + ATP + CoA = succinyl-CoA + ADP + phosphate. It carries out the reaction GTP + succinate + CoA = succinyl-CoA + GDP + phosphate. It functions in the pathway carbohydrate metabolism; tricarboxylic acid cycle; succinate from succinyl-CoA (ligase route): step 1/1. Succinyl-CoA synthetase functions in the citric acid cycle (TCA), coupling the hydrolysis of succinyl-CoA to the synthesis of either ATP or GTP and thus represents the only step of substrate-level phosphorylation in the TCA. The beta subunit provides nucleotide specificity of the enzyme and binds the substrate succinate, while the binding sites for coenzyme A and phosphate are found in the alpha subunit. The polypeptide is Succinate--CoA ligase [ADP-forming] subunit beta (Rhizobium johnstonii (strain DSM 114642 / LMG 32736 / 3841) (Rhizobium leguminosarum bv. viciae)).